The following is a 135-amino-acid chain: Retinol-binding protein 5 (135 aa).

The protein belongs to the calycin superfamily. Fatty-acid binding protein (FABP) family. Kidney.

Its subcellular location is the cytoplasm. Functionally, intracellular transport of retinol. The chain is Retinol-binding protein 5 (RBP5) from Bos taurus (Bovine).